A 195-amino-acid polypeptide reads, in one-letter code: Molybdenum cofactor guanylyltransferase (195 aa).

GTP-binding positions include 10-12 (LAG), K23, N51, D69, and D99. Residue D99 coordinates Mg(2+).

The protein belongs to the MobA family. Monomer. Requires Mg(2+) as cofactor.

It is found in the cytoplasm. The enzyme catalyses Mo-molybdopterin + GTP + H(+) = Mo-molybdopterin guanine dinucleotide + diphosphate. Its function is as follows. Transfers a GMP moiety from GTP to Mo-molybdopterin (Mo-MPT) cofactor (Moco or molybdenum cofactor) to form Mo-molybdopterin guanine dinucleotide (Mo-MGD) cofactor. The protein is Molybdenum cofactor guanylyltransferase of Shewanella putrefaciens (strain CN-32 / ATCC BAA-453).